The sequence spans 137 residues: Glutamate mutase sigma subunit (137 aa).

Residues 3–137 (KKTIVLGVIG…ADLKEDLNIK (135 aa)) form the B12-binding domain. Residues 13-17 (SDCHA), H16, 61-63 (SSL), and 93-97 (NIVVG) each bind adenosylcob(III)alamin.

It belongs to the methylaspartate mutase GlmS subunit family. In terms of assembly, heterotetramer composed of 2 epsilon subunits (GlmE) and 2 sigma subunits (GlmS). GlmE exists as a homodimer and GlmS as a monomer. Requires adenosylcob(III)alamin as cofactor.

The catalysed reaction is (2S,3S)-3-methyl-L-aspartate = L-glutamate. It functions in the pathway amino-acid degradation; L-glutamate degradation via mesaconate pathway; acetate and pyruvate from L-glutamate: step 1/4. In terms of biological role, catalyzes the carbon skeleton rearrangement of L-glutamate to L-threo-3-methylaspartate ((2S,3S)-3-methylaspartate). This Clostridium tetani (strain Massachusetts / E88) protein is Glutamate mutase sigma subunit.